The chain runs to 446 residues: Glutamyl-tRNA reductase 2 (446 aa).

Substrate is bound by residues 53-56 (TCNR), S105, 110-112 (EQQ), and Q116. C54 (nucleophile) is an active-site residue. NADP(+) is bound at residue 185-190 (GAGKMG). The interval 409-446 (AAELFGIENETAGGERREGGAEGAAAAPGAGPVRSQGT) is disordered. Positions 431–440 (GAAAAPGAGP) are enriched in low complexity.

Belongs to the glutamyl-tRNA reductase family. Homodimer.

It catalyses the reaction (S)-4-amino-5-oxopentanoate + tRNA(Glu) + NADP(+) = L-glutamyl-tRNA(Glu) + NADPH + H(+). The protein operates within porphyrin-containing compound metabolism; protoporphyrin-IX biosynthesis; 5-aminolevulinate from L-glutamyl-tRNA(Glu): step 1/2. In terms of biological role, catalyzes the NADPH-dependent reduction of glutamyl-tRNA(Glu) to glutamate 1-semialdehyde (GSA). This Anaeromyxobacter dehalogenans (strain 2CP-C) protein is Glutamyl-tRNA reductase 2.